Here is a 350-residue protein sequence, read N- to C-terminus: MAEDSEWVPESIAGFLGSPDWLIPLAEFMESRCSVFDDEDENKLTYTEIHQQYKQLVERLLENYMQDVGISEQQFLEACSSFSSSASLQTVFQPVLATDDFQMFRSLMVQKNMELQLQALHVIKQRNGGLPECLTDGVDVMSELEQQEMKILQEVLRRSKEEYDLQMGQCGLGSEDLASTSSSVSETPQNPEQRLSNGVSDPLTLTQPDSEMEESSTATQRKMEESEPTATTACKSKALPAVRAPLRGSVVAKQSSAERERELERARDTHTDCRTLTDEVALQQRSEYLKQQRDKLQALKRQTGKGLTDTAAAAAPEPKPATQEISVEEKKKLQKRKHVAEKLKEEVIKK.

The stretch at 142 to 167 (SELEQQEMKILQEVLRRSKEEYDLQM) forms a coiled coil. Disordered stretches follow at residues 171 to 233 (GLGS…ATTA) and 301 to 337 (RQTGKGLTDTAAAAAPEPKPATQEISVEEKKKLQKRK). Over residues 177–220 (LASTSSSVSETPQNPEQRLSNGVSDPLTLTQPDSEMEESSTATQ) the composition is skewed to polar residues. Residues 280–350 (VALQQRSEYL…EKLKEEVIKK (71 aa)) adopt a coiled-coil conformation.

This sequence belongs to the CFAP36 family.

It localises to the nucleus. It is found in the cytoplasm. Its subcellular location is the cell projection. The protein localises to the cilium. The protein resides in the flagellum. This chain is Cilia- and flagella-associated protein 36, found in Danio rerio (Zebrafish).